The sequence spans 277 residues: 3-methyl-2-oxobutanoate hydroxymethyltransferase (277 aa).

Residues aspartate 53 and aspartate 96 each coordinate Mg(2+). Residues 53–54 (DS), aspartate 96, and lysine 126 each bind 3-methyl-2-oxobutanoate. Glutamate 128 is a binding site for Mg(2+). Glutamate 195 acts as the Proton acceptor in catalysis.

Belongs to the PanB family. Homodecamer; pentamer of dimers. Requires Mg(2+) as cofactor.

It is found in the cytoplasm. The enzyme catalyses 3-methyl-2-oxobutanoate + (6R)-5,10-methylene-5,6,7,8-tetrahydrofolate + H2O = 2-dehydropantoate + (6S)-5,6,7,8-tetrahydrofolate. It participates in cofactor biosynthesis; (R)-pantothenate biosynthesis; (R)-pantoate from 3-methyl-2-oxobutanoate: step 1/2. In terms of biological role, catalyzes the reversible reaction in which hydroxymethyl group from 5,10-methylenetetrahydrofolate is transferred onto alpha-ketoisovalerate to form ketopantoate. This is 3-methyl-2-oxobutanoate hydroxymethyltransferase from Chlorobium phaeobacteroides (strain BS1).